A 98-amino-acid polypeptide reads, in one-letter code: NADH-ubiquinone oxidoreductase chain 4L (98 aa).

The next 3 membrane-spanning stretches (helical) occupy residues 1–21 (MSPLHFSFYSAFTFSSLGLAF), 26–46 (LISALLCLESMMLSMFIPLSI), and 56–76 (FALVPILMLAFSACEAGTGLA).

The protein belongs to the complex I subunit 4L family. Core subunit of respiratory chain NADH dehydrogenase (Complex I) which is composed of 45 different subunits.

Its subcellular location is the mitochondrion inner membrane. The enzyme catalyses a ubiquinone + NADH + 5 H(+)(in) = a ubiquinol + NAD(+) + 4 H(+)(out). Core subunit of the mitochondrial membrane respiratory chain NADH dehydrogenase (Complex I) which catalyzes electron transfer from NADH through the respiratory chain, using ubiquinone as an electron acceptor. Part of the enzyme membrane arm which is embedded in the lipid bilayer and involved in proton translocation. The chain is NADH-ubiquinone oxidoreductase chain 4L (MT-ND4L) from Gallus gallus (Chicken).